A 1010-amino-acid polypeptide reads, in one-letter code: Protein translocase subunit SecA (1010 aa).

ATP is bound by residues Gln86, 104-108 (GEGKT), and Asp535. Residues 893–904 (QAGAADGNAKGA) are compositionally biased toward low complexity. Residues 893–916 (QAGAADGNAKGARTVRHSVRLPGR) form a disordered region. Positions 920, 922, 931, and 932 each coordinate Zn(2+). Positions 950–981 (QHAAVAADTPAQPAPQATATRPPTSQVPRGRA) are enriched in low complexity. Residues 950-1010 (QHAAVAADTP…RGKGASARKK (61 aa)) form a disordered region.

The protein belongs to the SecA family. In terms of assembly, monomer and homodimer. Part of the essential Sec protein translocation apparatus which comprises SecA, SecYEG and auxiliary proteins SecDF. Other proteins may also be involved. Zn(2+) serves as cofactor.

It localises to the cell membrane. It is found in the cytoplasm. It carries out the reaction ATP + H2O + cellular proteinSide 1 = ADP + phosphate + cellular proteinSide 2.. Functionally, part of the Sec protein translocase complex. Interacts with the SecYEG preprotein conducting channel. Has a central role in coupling the hydrolysis of ATP to the transfer of proteins into and across the cell membrane, serving as an ATP-driven molecular motor driving the stepwise translocation of polypeptide chains across the membrane. The sequence is that of Protein translocase subunit SecA from Roseiflexus sp. (strain RS-1).